The chain runs to 30 residues: V-type proton ATPase catalytic subunit A isoform 1 (30 aa).

It belongs to the ATPase alpha/beta chains family. In terms of assembly, V-ATPase is a heteromultimeric enzyme composed of a peripheral catalytic V1 complex (main components: subunits A, B, C, D, E, and F) attached to an integral membrane V0 proton pore complex (main component: the proteolipid protein).

It catalyses the reaction ATP + H2O + 4 H(+)(in) = ADP + phosphate + 5 H(+)(out). Its function is as follows. Catalytic subunit of the peripheral V1 complex of vacuolar ATPase. V-ATPase vacuolar ATPase is responsible for acidifying a variety of intracellular compartments in eukaryotic cells. This Psilotum nudum (Whisk fern) protein is V-type proton ATPase catalytic subunit A isoform 1.